Here is a 111-residue protein sequence, read N- to C-terminus: Phosphoribosyl-AMP cyclohydrolase (111 aa).

Mg(2+) is bound at residue Asp-80. Cys-81 is a Zn(2+) binding site. 2 residues coordinate Mg(2+): Asp-82 and Asp-84. Residues Cys-97 and Cys-104 each contribute to the Zn(2+) site.

This sequence belongs to the PRA-CH family. In terms of assembly, homodimer. The cofactor is Mg(2+). It depends on Zn(2+) as a cofactor.

The protein localises to the cytoplasm. It carries out the reaction 1-(5-phospho-beta-D-ribosyl)-5'-AMP + H2O = 1-(5-phospho-beta-D-ribosyl)-5-[(5-phospho-beta-D-ribosylamino)methylideneamino]imidazole-4-carboxamide. Its pathway is amino-acid biosynthesis; L-histidine biosynthesis; L-histidine from 5-phospho-alpha-D-ribose 1-diphosphate: step 3/9. Functionally, catalyzes the hydrolysis of the adenine ring of phosphoribosyl-AMP. The protein is Phosphoribosyl-AMP cyclohydrolase of Mycobacterium ulcerans (strain Agy99).